The chain runs to 429 residues: Enolase 2 (429 aa).

A (2R)-2-phosphoglycerate-binding site is contributed by glutamine 163. The active-site Proton donor is the glutamate 205. Mg(2+) is bound by residues aspartate 242, glutamate 286, and aspartate 313. (2R)-2-phosphoglycerate contacts are provided by lysine 338, arginine 367, serine 368, and lysine 389. The active-site Proton acceptor is lysine 338.

The protein belongs to the enolase family. Mg(2+) is required as a cofactor.

It is found in the cytoplasm. The protein localises to the secreted. The protein resides in the cell surface. The catalysed reaction is (2R)-2-phosphoglycerate = phosphoenolpyruvate + H2O. The protein operates within carbohydrate degradation; glycolysis; pyruvate from D-glyceraldehyde 3-phosphate: step 4/5. Catalyzes the reversible conversion of 2-phosphoglycerate (2-PG) into phosphoenolpyruvate (PEP). It is essential for the degradation of carbohydrates via glycolysis. The chain is Enolase 2 from Lactiplantibacillus plantarum (strain ATCC BAA-793 / NCIMB 8826 / WCFS1) (Lactobacillus plantarum).